The chain runs to 668 residues: DNA ligase (668 aa).

NAD(+) contacts are provided by residues Asp-32–Asp-36, Ser-81–Leu-82, and Glu-110. Lys-112 acts as the N6-AMP-lysine intermediate in catalysis. NAD(+) is bound by residues Arg-133, Glu-167, Lys-283, and Lys-307. 4 residues coordinate Zn(2+): Cys-401, Cys-404, Cys-419, and Cys-424. The region spanning Gln-586–Lys-668 is the BRCT domain.

This sequence belongs to the NAD-dependent DNA ligase family. LigA subfamily. Mg(2+) serves as cofactor. The cofactor is Mn(2+).

It catalyses the reaction NAD(+) + (deoxyribonucleotide)n-3'-hydroxyl + 5'-phospho-(deoxyribonucleotide)m = (deoxyribonucleotide)n+m + AMP + beta-nicotinamide D-nucleotide.. Functionally, DNA ligase that catalyzes the formation of phosphodiester linkages between 5'-phosphoryl and 3'-hydroxyl groups in double-stranded DNA using NAD as a coenzyme and as the energy source for the reaction. It is essential for DNA replication and repair of damaged DNA. This chain is DNA ligase, found in Staphylococcus carnosus (strain TM300).